The sequence spans 344 residues: GTP 3',8-cyclase (344 aa).

Residues 19-239 (PFGRTIDYLR…ANYTLTDLPD (221 aa)) enclose the Radical SAM core domain. Arginine 28 lines the GTP pocket. Residues cysteine 35 and cysteine 39 each coordinate [4Fe-4S] cluster. Tyrosine 41 lines the S-adenosyl-L-methionine pocket. Cysteine 42 serves as a coordination point for [4Fe-4S] cluster. Arginine 77 is a binding site for GTP. An S-adenosyl-L-methionine-binding site is contributed by glycine 81. Residue threonine 111 coordinates GTP. Serine 135 serves as a coordination point for S-adenosyl-L-methionine. Lysine 171 provides a ligand contact to GTP. An S-adenosyl-L-methionine-binding site is contributed by methionine 205. Residues cysteine 268 and cysteine 271 each coordinate [4Fe-4S] cluster. Residue 273-275 (RVR) participates in GTP binding. Cysteine 285 serves as a coordination point for [4Fe-4S] cluster.

Belongs to the radical SAM superfamily. MoaA family. In terms of assembly, monomer and homodimer. [4Fe-4S] cluster serves as cofactor.

It catalyses the reaction GTP + AH2 + S-adenosyl-L-methionine = (8S)-3',8-cyclo-7,8-dihydroguanosine 5'-triphosphate + 5'-deoxyadenosine + L-methionine + A + H(+). Its pathway is cofactor biosynthesis; molybdopterin biosynthesis. In terms of biological role, catalyzes the cyclization of GTP to (8S)-3',8-cyclo-7,8-dihydroguanosine 5'-triphosphate. This Rhodopseudomonas palustris (strain TIE-1) protein is GTP 3',8-cyclase.